A 216-amino-acid chain; its full sequence is MVASAYSFMASTWASEEWKKTVIRQRLVEWRNQNTVTRIEKPTRLDRARALGYKAKQGIIVARVKVEKGGMDKQRPNSGRRPKRMGVYGFSPAKSLQFIAEEKAARKFPGLEVLGSYYVAEDGKYKYYEVILVDPHNPVIMSDPQFNWLKNPANRGRVFRGLTSAGRRTRGLLKSRGLKGTIHYKIARKKKEREQKKRHEASKYYRLAKYDRIPGK.

It belongs to the eukaryotic ribosomal protein eL15 family.

The polypeptide is Large ribosomal subunit protein eL15 (Metallosphaera sedula (strain ATCC 51363 / DSM 5348 / JCM 9185 / NBRC 15509 / TH2)).